The following is a 231-amino-acid chain: Chromosome partition protein MukE (231 aa).

A disordered region spans residues 195-231 (MIRDGEAMPVEGSLSLKDDSDDNDRTDDTAPETGEDE). A compositionally biased stretch (acidic residues) spans 213–231 (DSDDNDRTDDTAPETGEDE).

It belongs to the MukE family. In terms of assembly, interacts, and probably forms a ternary complex, with MukF and MukB. The complex formation is stimulated by calcium or magnesium.

The protein localises to the cytoplasm. It localises to the nucleoid. Its function is as follows. Involved in chromosome condensation, segregation and cell cycle progression. May participate in facilitating chromosome segregation by condensation DNA from both sides of a centrally located replisome during cell division. Probably acts via its interaction with MukB and MukF. The chain is Chromosome partition protein MukE from Pectobacterium atrosepticum (strain SCRI 1043 / ATCC BAA-672) (Erwinia carotovora subsp. atroseptica).